Reading from the N-terminus, the 136-residue chain is uncharacterized protein (136 aa).

A run of 2 helical transmembrane segments spans residues 36 to 56 (FLLT…IYLI) and 63 to 83 (FAFA…LFLS).

It localises to the cell membrane. This is an uncharacterized protein from Mycoplasma pneumoniae (strain ATCC 29342 / M129 / Subtype 1) (Mycoplasmoides pneumoniae).